The primary structure comprises 592 residues: UPF0329 protein ECU01_0110/ECU01_1500/ECU08_0040 (592 aa).

Basic and acidic residues-rich tracts occupy residues 306–339 and 353–362; these read RQRR…SKEK and EAKEEEKKES. Positions 306–404 are disordered; sequence RQRRREREIE…RKRYKIHRRV (99 aa).

It belongs to the UPF0329 family.

The polypeptide is UPF0329 protein ECU01_0110/ECU01_1500/ECU08_0040 (Encephalitozoon cuniculi (strain GB-M1) (Microsporidian parasite)).